The sequence spans 24 residues: Snake venom metalloproteinase Batx-1 (24 aa).

One can recognise a Peptidase M12B domain in the interval 1–24; that stretch reads YIELAVVADHGIFTKYNSNLNTIR. Glu-3 is a Ca(2+) binding site.

Belongs to the venom metalloproteinase (M12B) family. P-I subfamily. Monomer. It depends on Zn(2+) as a cofactor. In terms of processing, the N-terminus is blocked. Post-translationally, contains 3 disulfide bonds. As to expression, expressed by the venom gland.

The protein resides in the secreted. Its activity is regulated as follows. Inhibited by EDTA, and o-phenanthroline, but not inhibited by PMSF, pepstatin A, and aprotinin. Functionally, zinc metalloproteinase that exhits a weak hemorrhagic activity. Degrades preferentially the Aalpha- (FGA) and Bbeta-chains (FGB) of fibrinogen, and partially degrades gamma-chain (FGG) at higher concentration. Induces a mild myotoxicity, but lacks coagulant activity on human plasma or bovin fibrinogen and defibrinating activity. The protein is Snake venom metalloproteinase Batx-1 of Bothrops atrox (Barba amarilla).